The following is a 325-amino-acid chain: Taste receptor type 2 member 7 (325 aa).

At 1-9 (MADKVQTTL) the chain is on the extracellular side. A helical transmembrane segment spans residues 10-30 (LFLAVGEFSVGILGNAFIGLV). Residues 31–55 (NCMDWVKKRKIASIDLILTSLAISR) lie on the Cytoplasmic side of the membrane. The helical transmembrane segment at 56-76 (ICLLCVILLDCFILVLYPDVY) threads the bilayer. Topologically, residues 77 to 94 (ATGKEMRIIDFFWTLTNH) are extracellular. A helical membrane pass occupies residues 95–115 (LSIWFATCLSIYYFFRIANFF). Residues 116–128 (HPLFLWMKWRIDR) are Cytoplasmic-facing. A helical membrane pass occupies residues 129–149 (VISWILLGCVVLSVFISLPAT). At 150 to 187 (ENLNADFRFCVKAKRKTNLTWSCRVNKTQHASTKLFLN) the chain is on the extracellular side. Residues Asn167 and Asn175 are each glycosylated (N-linked (GlcNAc...) asparagine). Residues 188–208 (LATLLPFCVCLMSFFLLILSL) traverse the membrane as a helical segment. At 209–235 (RRHIRRMQLSATGCRDPSTEAHVRALK) the chain is on the cytoplasmic side. A helical transmembrane segment spans residues 236–256 (AVISFLLLFIAYYLSFLVATS). Topologically, residues 257 to 266 (SYFMPETELA) are extracellular. A helical transmembrane segment spans residues 267 to 287 (VIFGESIALIYPSSHSFILIL). Residues 288–319 (GNNKLRHASLKVIWKVMSILKGRKFQQHKQIG) lie on the Cytoplasmic side of the membrane.

It belongs to the G-protein coupled receptor T2R family.

It is found in the membrane. Gustducin-coupled receptor implicated in the perception of bitter compounds in the oral cavity and the gastrointestinal tract. Signals through PLCB2 and the calcium-regulated cation channel TRPM5. The chain is Taste receptor type 2 member 7 (TAS2R7) from Pan paniscus (Pygmy chimpanzee).